Consider the following 320-residue polypeptide: tRNA U34 carboxymethyltransferase (320 aa).

Carboxy-S-adenosyl-L-methionine is bound by residues K89, W103, K108, G128, 150–152 (DPT), 179–180 (LE), M194, Y198, and R313.

This sequence belongs to the class I-like SAM-binding methyltransferase superfamily. CmoB family. In terms of assembly, homotetramer.

The catalysed reaction is carboxy-S-adenosyl-L-methionine + 5-hydroxyuridine(34) in tRNA = 5-carboxymethoxyuridine(34) in tRNA + S-adenosyl-L-homocysteine + H(+). Its function is as follows. Catalyzes carboxymethyl transfer from carboxy-S-adenosyl-L-methionine (Cx-SAM) to 5-hydroxyuridine (ho5U) to form 5-carboxymethoxyuridine (cmo5U) at position 34 in tRNAs. This Haemophilus ducreyi (strain 35000HP / ATCC 700724) protein is tRNA U34 carboxymethyltransferase.